The primary structure comprises 741 residues: Mitofusin-1 (741 aa).

The Cytoplasmic portion of the chain corresponds to 1 to 584; that stretch reads MAEPVSPLKH…ASQEELMITL (584 aa). Positions 9-73 are part of a helix bundle domain, formed by helices from N-terminal and C-terminal regions; it reads KHFVLAKKAI…LSIIGEVLSR (65 aa). Residues 72 to 321 enclose the Dynamin-type G domain; the sequence is SRRHMKVAFF…ARLQEFQNFE (250 aa). The segment at 82–89 is G1 motif; it reads GRTSSGKS. 85-90 is a binding site for GTP; the sequence is SSGKSS. The segment at 108-109 is G2 motif; sequence IT. Positions 178–181 are G3 motif; it reads DSPG. 237-240 contributes to the GTP binding site; the sequence is NRWD. Positions 237 to 240 are G4 motif; it reads NRWD. Residue Glu266 is a region of interest, G5 motif. 2 residues coordinate GTP: Ser284 and Lys286. The interval 338-364 is part of a helix bundle domain, formed by helices from N-terminal and C-terminal regions; sequence EQHTIRAKQILATVKNIMDSVNLAAED. Residues 371-408 are a coiled coil; it reads EEREDQIDRLDFIRNQMNLLTLDVKKKIKEVTEEVANK. A helical membrane pass occupies residues 585–605; it reads VTGLASVTSRTSMGIIIVGGV. Residues 606–608 are Mitochondrial intermembrane-facing; sequence IWK. A helical membrane pass occupies residues 609–629; it reads TIGWKLLSVSLTMYGALYLYE. At 630–741 the chain is on the cytoplasmic side; that stretch reads RLSWTTHAKE…QFLPSSNEES (112 aa). Positions 679-734 form a coiled coil; the sequence is RLCQQVDITQKQLEEEIARLPKEIDQLEKIQNNSKLLRNKAVQLENELENFTKQFL. The part of a helix bundle domain, formed by helices from N-terminal and C-terminal regions stretch occupies residues 703 to 734; that stretch reads DQLEKIQNNSKLLRNKAVQLENELENFTKQFL.

The protein belongs to the TRAFAC class dynamin-like GTPase superfamily. Dynamin/Fzo/YdjA family. Mitofusin subfamily. As to quaternary structure, homodimer, also in the absence of bound GTP. Forms higher oligomers in the presence of a transition state GTP analog. Forms homomultimers and heteromultimers with MFN2. Oligomerization is essential for mitochondrion fusion. Component of a high molecular weight multiprotein complex. Interacts with VAT1. Interacts with THG1L; THG1L probably functions as a guanyl-nucleotide exchange factor/GEF, activating MFN1. In terms of processing, ubiquitinated by non-degradative ubiquitin by PRKN. Deubiquitination by USP30 inhibits mitochondrial fusion. Ubiquitinated by MARCHF5. When mitochondria are depolarized and dysfunctional, it is ubiquitinated by a SCF (SKP1-CUL1-F-box protein) E3 ubiquitin-protein ligase complex that contains FBXO7 and PRKN. As to expression, detected in kidney and heart (at protein level). Ubiquitous. Expressed at slightly higher level in kidney and heart. Isoform 2 may be overexpressed in some tumors, such as lung cancers.

It is found in the mitochondrion outer membrane. The protein localises to the cytoplasm. It carries out the reaction GTP + H2O = GDP + phosphate + H(+). Its function is as follows. Mitochondrial outer membrane GTPase that mediates mitochondrial clustering and fusion. Membrane clustering requires GTPase activity. It may involve a major rearrangement of the coiled coil domains. Mitochondria are highly dynamic organelles, and their morphology is determined by the equilibrium between mitochondrial fusion and fission events. Overexpression induces the formation of mitochondrial networks (in vitro). Has low GTPase activity. This Homo sapiens (Human) protein is Mitofusin-1 (MFN1).